The sequence spans 437 residues: GTPase Der (437 aa).

EngA-type G domains follow at residues 2–167 (ATVL…EKKG) and 180–356 (IRVA…NSLF). GTP is bound by residues 8 to 15 (GKSNVGKS), 55 to 59 (DTCGI), 118 to 121 (NKSE), 186 to 193 (GRPNAGKS), 233 to 237 (DTAGL), and 299 to 302 (NKID). One can recognise a KH-like domain in the interval 357–437 (YRVQTSAVNA…PIFLKFKNRH (81 aa)).

This sequence belongs to the TRAFAC class TrmE-Era-EngA-EngB-Septin-like GTPase superfamily. EngA (Der) GTPase family. Associates with the 50S ribosomal subunit.

In terms of biological role, GTPase that plays an essential role in the late steps of ribosome biogenesis. The chain is GTPase Der from Thermosipho melanesiensis (strain DSM 12029 / CIP 104789 / BI429).